A 244-amino-acid chain; its full sequence is Electron transfer flavoprotein beta subunit lysine methyltransferase homolog (244 aa).

The protein belongs to the methyltransferase superfamily. ETFBKMT family.

Its function is as follows. Probable methyltransferase. The chain is Electron transfer flavoprotein beta subunit lysine methyltransferase homolog from Caenorhabditis elegans.